An 85-amino-acid chain; its full sequence is U4-theraphotoxin-Hhn1f (85 aa).

Positions 1 to 22 (MKVTLIAILTCAAVLVLHTTAA) are cleaved as a signal peptide. Residues 23–48 (EELEAESQLMEVGMPDTELAAVDEER) constitute a propeptide that is removed on maturation. Cysteines 71 and 82 form a disulfide.

The protein belongs to the neurotoxin 12 (Hwtx-2) family. 02 (Hwtx-2) subfamily. As to expression, expressed by the venom gland.

It is found in the secreted. In terms of biological role, postsynaptic neurotoxin. The polypeptide is U4-theraphotoxin-Hhn1f (Cyriopagopus hainanus (Chinese bird spider)).